The following is a 944-amino-acid chain: Isoleucine--tRNA ligase (944 aa).

The short motif at 58 to 68 (PYANGSIHIGH) is the 'HIGH' region element. Glutamate 563 contacts L-isoleucyl-5'-AMP. The 'KMSKS' region motif lies at 604–608 (KMSKS). Lysine 607 provides a ligand contact to ATP. Zn(2+) is bound by residues cysteine 907, cysteine 910, cysteine 927, and cysteine 930.

The protein belongs to the class-I aminoacyl-tRNA synthetase family. IleS type 1 subfamily. In terms of assembly, monomer. Zn(2+) serves as cofactor.

The protein localises to the cytoplasm. The catalysed reaction is tRNA(Ile) + L-isoleucine + ATP = L-isoleucyl-tRNA(Ile) + AMP + diphosphate. In terms of biological role, catalyzes the attachment of isoleucine to tRNA(Ile). As IleRS can inadvertently accommodate and process structurally similar amino acids such as valine, to avoid such errors it has two additional distinct tRNA(Ile)-dependent editing activities. One activity is designated as 'pretransfer' editing and involves the hydrolysis of activated Val-AMP. The other activity is designated 'posttransfer' editing and involves deacylation of mischarged Val-tRNA(Ile). The sequence is that of Isoleucine--tRNA ligase from Salmonella typhi.